Reading from the N-terminus, the 497-residue chain is MORN repeat-containing protein 1 (497 aa).

Residues 1-27 (MAAAGEGTPSSRGPRRDPPRRPPRNGY) are disordered. MORN repeat units follow at residues 39 to 61 (YEGE…DGSY), 62 to 84 (YEGA…WSGD), 86 to 108 (FSGQ…AGGC), 109 to 131 (YEGE…DGQV), 132 to 154 (YQGS…NGDK), 155 to 177 (YDGD…DGST), and 178 to 200 (YKGQ…SGVT). 2 disordered regions span residues 393–425 (GGRS…ATEE) and 468–497 (QPPH…PAPR).

In Homo sapiens (Human), this protein is MORN repeat-containing protein 1 (MORN1).